We begin with the raw amino-acid sequence, 391 residues long: Formate-dependent phosphoribosylglycinamide formyltransferase (391 aa).

Residues 20–21 (EL) and E80 contribute to the N(1)-(5-phospho-beta-D-ribosyl)glycinamide site. Residues R112, K153, 158 to 163 (SSGKGQ), 193 to 196 (EGFI), and E201 each bind ATP. Positions 117-306 (RLAAEDLQIP…EFALHVRAFL (190 aa)) constitute an ATP-grasp domain. Mg(2+) contacts are provided by E265 and E277. N(1)-(5-phospho-beta-D-ribosyl)glycinamide is bound by residues D284, K354, and 361 to 362 (RR).

It belongs to the PurK/PurT family. As to quaternary structure, homodimer.

The catalysed reaction is N(1)-(5-phospho-beta-D-ribosyl)glycinamide + formate + ATP = N(2)-formyl-N(1)-(5-phospho-beta-D-ribosyl)glycinamide + ADP + phosphate + H(+). The protein operates within purine metabolism; IMP biosynthesis via de novo pathway; N(2)-formyl-N(1)-(5-phospho-D-ribosyl)glycinamide from N(1)-(5-phospho-D-ribosyl)glycinamide (formate route): step 1/1. Functionally, involved in the de novo purine biosynthesis. Catalyzes the transfer of formate to 5-phospho-ribosyl-glycinamide (GAR), producing 5-phospho-ribosyl-N-formylglycinamide (FGAR). Formate is provided by PurU via hydrolysis of 10-formyl-tetrahydrofolate. This is Formate-dependent phosphoribosylglycinamide formyltransferase from Photobacterium profundum (strain SS9).